The sequence spans 461 residues: Ig heavy chain C region, membrane-bound form (461 aa).

Positions Ala1–Pro99 are CH1. Residues Asp100–Gln205 are CH2. 8 N-linked (GlcNAc...) asparagine glycosylation sites follow: Asn164, Asn200, Asn245, Asn275, Asn374, Asn411, Asn415, and Asn437. The CH3 stretch occupies residues Val206–Glu308. A CH4 region spans residues Val309–Ser418. The chain crosses the membrane as a helical span at residues Ala438–Val458.

It localises to the cell membrane. This chain is Ig heavy chain C region, membrane-bound form, found in Heterodontus francisci (Horn shark).